A 968-amino-acid polypeptide reads, in one-letter code: RNA polymerase-associated protein RapA (968 aa).

The Helicase ATP-binding domain maps to 163–332 (EVGRRYAPRV…FARLRLLDPD (170 aa)). 176–183 (DEVGLGKT) is a binding site for ATP. The DEAH box signature appears at 278–281 (DEAH). Residues 491-655 (RVDWLIEFLK…EFAEELLNVL (165 aa)) enclose the Helicase C-terminal domain.

This sequence belongs to the SNF2/RAD54 helicase family. RapA subfamily. Interacts with the RNAP. Has a higher affinity for the core RNAP than for the holoenzyme. Its ATPase activity is stimulated by binding to RNAP.

Functionally, transcription regulator that activates transcription by stimulating RNA polymerase (RNAP) recycling in case of stress conditions such as supercoiled DNA or high salt concentrations. Probably acts by releasing the RNAP, when it is trapped or immobilized on tightly supercoiled DNA. Does not activate transcription on linear DNA. Probably not involved in DNA repair. The sequence is that of RNA polymerase-associated protein RapA from Shewanella oneidensis (strain ATCC 700550 / JCM 31522 / CIP 106686 / LMG 19005 / NCIMB 14063 / MR-1).